The sequence spans 362 residues: DLA class I histocompatibility antigen, A9/A9 alpha chain (362 aa).

The N-terminal stretch at 1–24 is a signal peptide; the sequence is MEVVMPRALLVLLSAALALTPTRA. An alpha-1 region spans residues 25–114; that stretch reads GSHSLRYFYT…LRGYYNQSEA (90 aa). At 25-306 the chain is on the extracellular side; the sequence is GSHSLRYFYT…RRWEPSPLST (282 aa). Asn110 is a glycosylation site (N-linked (GlcNAc...) asparagine). The interval 115 to 207 is alpha-2; that stretch reads GSHTRQTMYG…EMGKETLLRA (93 aa). Intrachain disulfides connect Cys125-Cys189 and Cys228-Cys284. The interval 208-299 is alpha-3; the sequence is DPPSTRVTHH…GLPEPITRRW (92 aa). The region spanning 210–296 is the Ig-like C1-type domain; sequence PSTRVTHHPV…QHEGLPEPIT (87 aa). Residues 300–306 form a connecting peptide region; the sequence is EPSPLST. The helical transmembrane segment at 307–329 threads the bilayer; it reads IVIVSIAALVLLVVAGVIGAVIW. Topologically, residues 330-362 are cytoplasmic; sequence RKQRSGGKGPGYSHAARDDSAQGSDVSLTAPRV. Residues 333-362 form a disordered region; it reads RSGGKGPGYSHAARDDSAQGSDVSLTAPRV.

The protein belongs to the MHC class I family. As to quaternary structure, heterodimer of an alpha chain and a beta chain (beta-2-microglobulin).

It is found in the membrane. Functionally, involved in the presentation of foreign antigens to the immune system. This Canis lupus familiaris (Dog) protein is DLA class I histocompatibility antigen, A9/A9 alpha chain.